Consider the following 218-residue polypeptide: 23 kDa integral membrane protein (218 aa).

At Met1–Lys12 the chain is on the cytoplasmic side. A helical membrane pass occupies residues Ser13–Val36. The Extracellular segment spans residues Glu37–Pro55. Residues Ile56–Leu71 traverse the membrane as a helical segment. The Cytoplasmic segment spans residues Gly72–Cys82. A helical transmembrane segment spans residues Met83–Tyr108. At Lys109–Asn183 the chain is on the extracellular side. A helical transmembrane segment spans residues Leu184–Ala205. Over Cys206–Val218 the chain is Cytoplasmic.

Belongs to the tetraspanin (TM4SF) family.

It is found in the membrane. This chain is 23 kDa integral membrane protein, found in Schistosoma japonicum (Blood fluke).